Consider the following 176-residue polypeptide: Late embryogenesis abundant protein 49 (176 aa).

SMP domains follow at residues 49-106 (TTLT…RNQK) and 115-171 (NLGD…KLNH).

This sequence belongs to the LEA type SMP family.

The protein localises to the cytoplasm. It is found in the nucleus. Functionally, LEA proteins are late embryonic proteins abundant in higher plant seed embryos. The function of those proteins is not known. This Arabidopsis thaliana (Mouse-ear cress) protein is Late embryogenesis abundant protein 49.